Consider the following 261-residue polypeptide: Cytochrome c oxidase subunit 3 (261 aa).

The Mitochondrial matrix segment spans residues 1-15 (MAHQAHPYHMVDPSP). A helical membrane pass occupies residues 16–34 (WPLTGATAALLMTSGLAIW). Over 35-40 (FHFHSL) the chain is Mitochondrial intermembrane. A helical membrane pass occupies residues 41–66 (LLLYLGLTLLLLTMIQWWRDIIREGT). The Mitochondrial matrix segment spans residues 67-72 (FQGHHT). The helical transmembrane segment at 73 to 105 (PPVQKGLRYGMILFIVSEVFFFLGFFWAFYHSS) threads the bilayer. The Mitochondrial intermembrane segment spans residues 106–128 (LAPTPELGGCWPPTGINPLDPFE). A helical membrane pass occupies residues 129–152 (VPLLNTAVLLASGVTVTWAHHGLM). The Mitochondrial matrix segment spans residues 153 to 155 (EGN). The helical transmembrane segment at 156–183 (RKEAIQALTLTIILGVYFTALQAMEYYE) threads the bilayer. At 184-190 (APFTIAD) the chain is on the mitochondrial intermembrane side. The chain crosses the membrane as a helical span at residues 191–223 (GVYGTTFFVATGFHGLHVIIGSTFLAVCLLRQV). Over 224–232 (LYHFTSEHH) the chain is Mitochondrial matrix. The helical transmembrane segment at 233 to 256 (FGFEAAAWYWHFVDVVWLFLYVSI) threads the bilayer. Topologically, residues 257–261 (YWWGS) are mitochondrial intermembrane.

This sequence belongs to the cytochrome c oxidase subunit 3 family. As to quaternary structure, component of the cytochrome c oxidase (complex IV, CIV), a multisubunit enzyme composed of 14 subunits. The complex is composed of a catalytic core of 3 subunits MT-CO1, MT-CO2 and MT-CO3, encoded in the mitochondrial DNA, and 11 supernumerary subunits COX4I, COX5A, COX5B, COX6A, COX6B, COX6C, COX7A, COX7B, COX7C, COX8 and NDUFA4, which are encoded in the nuclear genome. The complex exists as a monomer or a dimer and forms supercomplexes (SCs) in the inner mitochondrial membrane with NADH-ubiquinone oxidoreductase (complex I, CI) and ubiquinol-cytochrome c oxidoreductase (cytochrome b-c1 complex, complex III, CIII), resulting in different assemblies (supercomplex SCI(1)III(2)IV(1) and megacomplex MCI(2)III(2)IV(2)).

Its subcellular location is the mitochondrion inner membrane. It catalyses the reaction 4 Fe(II)-[cytochrome c] + O2 + 8 H(+)(in) = 4 Fe(III)-[cytochrome c] + 2 H2O + 4 H(+)(out). In terms of biological role, component of the cytochrome c oxidase, the last enzyme in the mitochondrial electron transport chain which drives oxidative phosphorylation. The respiratory chain contains 3 multisubunit complexes succinate dehydrogenase (complex II, CII), ubiquinol-cytochrome c oxidoreductase (cytochrome b-c1 complex, complex III, CIII) and cytochrome c oxidase (complex IV, CIV), that cooperate to transfer electrons derived from NADH and succinate to molecular oxygen, creating an electrochemical gradient over the inner membrane that drives transmembrane transport and the ATP synthase. Cytochrome c oxidase is the component of the respiratory chain that catalyzes the reduction of oxygen to water. Electrons originating from reduced cytochrome c in the intermembrane space (IMS) are transferred via the dinuclear copper A center (CU(A)) of subunit 2 and heme A of subunit 1 to the active site in subunit 1, a binuclear center (BNC) formed by heme A3 and copper B (CU(B)). The BNC reduces molecular oxygen to 2 water molecules using 4 electrons from cytochrome c in the IMS and 4 protons from the mitochondrial matrix. The chain is Cytochrome c oxidase subunit 3 (MT-CO3) from Scyliorhinus canicula (Small-spotted catshark).